The sequence spans 339 residues: Dihydroorotase (339 aa).

Zn(2+)-binding residues include histidine 12 and histidine 14. Substrate is bound by residues 14–16 and asparagine 40; that span reads HVR. Zn(2+) is bound by residues lysine 94, histidine 133, histidine 167, and aspartate 239. N6-carboxylysine is present on lysine 94. Residue histidine 133 coordinates substrate. Residue aspartate 239 is part of the active site. Substrate is bound by residues histidine 243 and alanine 255.

It belongs to the metallo-dependent hydrolases superfamily. DHOase family. Class II DHOase subfamily. As to quaternary structure, homodimer. Requires Zn(2+) as cofactor.

It catalyses the reaction (S)-dihydroorotate + H2O = N-carbamoyl-L-aspartate + H(+). It participates in pyrimidine metabolism; UMP biosynthesis via de novo pathway; (S)-dihydroorotate from bicarbonate: step 3/3. Its function is as follows. Catalyzes the reversible cyclization of carbamoyl aspartate to dihydroorotate. In Helicobacter pylori (strain HPAG1), this protein is Dihydroorotase.